Reading from the N-terminus, the 180-residue chain is Inner membrane-spanning protein YciB (180 aa).

A run of 5 helical transmembrane segments spans residues 10-30 (IIAFFVFYKLADIYVATGVLM), 47-67 (ITTRHWVILAVVMLFGAVTLL), 74-94 (IKMKVSVVYVAIALMLLGGLI), 121-141 (YAWIIFCLALAAVNLYIAEFW), and 151-171 (VFGILGISLVFTIGTGFYMYH).

Belongs to the YciB family.

The protein localises to the cell inner membrane. Its function is as follows. Plays a role in cell envelope biogenesis, maintenance of cell envelope integrity and membrane homeostasis. The chain is Inner membrane-spanning protein YciB from Idiomarina loihiensis (strain ATCC BAA-735 / DSM 15497 / L2-TR).